Reading from the N-terminus, the 258-residue chain is MGKKDKRWVLQRKNDHYYNLAKKRNYRSRATYKLFQLNEKFNLIKERNVVVDLGCAPGGWLQAARDIVGEKGFIVGIDLQTVKPLPYENVIAIKGDMTKEEILKQAKDLLPEKPDVIICDASPNISGVWDVDHARSLELTTMALMTATKMLKKGGNFVVKVFQGDLFEKYVQLVSEYFDKAFTTKPRASRDESAEVYVIGKRFNGRKFDINSKSPIVKLLDTNPEEKEITSPSLRKEISKEDSGLMIKRIKEMRSKKE.

S-adenosyl-L-methionine contacts are provided by G58, W60, D78, D96, and D120. K160 serves as the catalytic Proton acceptor.

This sequence belongs to the class I-like SAM-binding methyltransferase superfamily. RNA methyltransferase RlmE family.

The protein resides in the cytoplasm. It catalyses the reaction uridine(2552) in 23S rRNA + S-adenosyl-L-methionine = 2'-O-methyluridine(2552) in 23S rRNA + S-adenosyl-L-homocysteine + H(+). Its function is as follows. Specifically methylates the uridine in position 2552 of 23S rRNA at the 2'-O position of the ribose in the fully assembled 50S ribosomal subunit. The protein is Ribosomal RNA large subunit methyltransferase E of Methanococcus maripaludis (strain C7 / ATCC BAA-1331).